The primary structure comprises 120 residues: UPF0342 protein LAF_1331 (120 aa).

It belongs to the UPF0342 family.

The protein is UPF0342 protein LAF_1331 of Limosilactobacillus fermentum (strain NBRC 3956 / LMG 18251) (Lactobacillus fermentum).